The primary structure comprises 749 residues: Tryptophan 2-monooxygenase (749 aa).

The FMN site is built by S232, E252, K260, and R280. R280 serves as a coordination point for substrate.

This sequence belongs to the tryptophan 2-monooxygenase family. It depends on FMN as a cofactor.

It carries out the reaction L-tryptophan + O2 = indole-3-acetamide + CO2 + H2O. The protein operates within plant hormone metabolism; auxin biosynthesis. This Rhizobium rhizogenes (Agrobacterium rhizogenes) protein is Tryptophan 2-monooxygenase (aux1).